We begin with the raw amino-acid sequence, 247 residues long: CDP-diacylglycerol pyrophosphatase (247 aa).

A helical membrane pass occupies residues 5–22 (IVLALVVSVAVAGGWLWM).

It belongs to the Cdh family.

The protein localises to the cell inner membrane. The enzyme catalyses a CDP-1,2-diacyl-sn-glycerol + H2O = a 1,2-diacyl-sn-glycero-3-phosphate + CMP + 2 H(+). The protein operates within phospholipid metabolism; CDP-diacylglycerol degradation; phosphatidate from CDP-diacylglycerol: step 1/1. The protein is CDP-diacylglycerol pyrophosphatase of Enterobacter sp. (strain 638).